The following is a 178-amino-acid chain: uncharacterized protein (178 aa).

Residues 1 to 20 (MKKLLVASLALLILTPVALA) form the signal peptide.

This is an uncharacterized protein from Archaeoglobus fulgidus (strain ATCC 49558 / DSM 4304 / JCM 9628 / NBRC 100126 / VC-16).